The chain runs to 415 residues: Glutamyl-tRNA reductase (415 aa).

Substrate is bound by residues 49–52 (TCNR), S104, 109–111 (EPQ), and Q115. C50 serves as the catalytic Nucleophile. An NADP(+)-binding site is contributed by 184 to 189 (GAGEMI).

Belongs to the glutamyl-tRNA reductase family. As to quaternary structure, homodimer.

It catalyses the reaction (S)-4-amino-5-oxopentanoate + tRNA(Glu) + NADP(+) = L-glutamyl-tRNA(Glu) + NADPH + H(+). Its pathway is porphyrin-containing compound metabolism; protoporphyrin-IX biosynthesis; 5-aminolevulinate from L-glutamyl-tRNA(Glu): step 1/2. In terms of biological role, catalyzes the NADPH-dependent reduction of glutamyl-tRNA(Glu) to glutamate 1-semialdehyde (GSA). This chain is Glutamyl-tRNA reductase, found in Neisseria meningitidis serogroup C / serotype 2a (strain ATCC 700532 / DSM 15464 / FAM18).